Reading from the N-terminus, the 130-residue chain is Small ribosomal subunit protein uS11 (130 aa).

It belongs to the universal ribosomal protein uS11 family. Part of the 30S ribosomal subunit. Interacts with proteins S7 and S18. Binds to IF-3.

In terms of biological role, located on the platform of the 30S subunit, it bridges several disparate RNA helices of the 16S rRNA. Forms part of the Shine-Dalgarno cleft in the 70S ribosome. In Alkalilimnicola ehrlichii (strain ATCC BAA-1101 / DSM 17681 / MLHE-1), this protein is Small ribosomal subunit protein uS11.